A 241-amino-acid chain; its full sequence is DNA repair protein RecO (241 aa).

The protein belongs to the RecO family.

In terms of biological role, involved in DNA repair and RecF pathway recombination. The protein is DNA repair protein RecO of Xanthomonas campestris pv. campestris (strain B100).